The following is a 474-amino-acid chain: PRAME family member 14 (474 aa).

5 LRR repeats span residues 15-38 (QSLLRDQALSISAMEELPRVLYLP), 204-229 (LNSIQQLEIRNMSWPRLIRKLRCYLK), 271-294 (LLKIKLITFFSGHLEQLIRCLQNP), 319-342 (LGYLKHLNLSYVLLFRISLEPLGA), and 391-414 (MGALKDLLCHTSGLSKLSLETYPA).

It belongs to the PRAME family.

The chain is PRAME family member 14 from Homo sapiens (Human).